Consider the following 412-residue polypeptide: ATP phosphoribosyltransferase regulatory subunit (412 aa).

It belongs to the class-II aminoacyl-tRNA synthetase family. HisZ subfamily. In terms of assembly, heteromultimer composed of HisG and HisZ subunits.

The protein resides in the cytoplasm. It participates in amino-acid biosynthesis; L-histidine biosynthesis; L-histidine from 5-phospho-alpha-D-ribose 1-diphosphate: step 1/9. Functionally, required for the first step of histidine biosynthesis. May allow the feedback regulation of ATP phosphoribosyltransferase activity by histidine. This chain is ATP phosphoribosyltransferase regulatory subunit, found in Dehalococcoides mccartyi (strain ATCC BAA-2100 / JCM 16839 / KCTC 5957 / BAV1).